The chain runs to 140 residues: Ribonuclease P protein component (140 aa).

It belongs to the RnpA family. In terms of assembly, consists of a catalytic RNA component (M1 or rnpB) and a protein subunit.

It carries out the reaction Endonucleolytic cleavage of RNA, removing 5'-extranucleotides from tRNA precursor.. Its function is as follows. RNaseP catalyzes the removal of the 5'-leader sequence from pre-tRNA to produce the mature 5'-terminus. It can also cleave other RNA substrates such as 4.5S RNA. The protein component plays an auxiliary but essential role in vivo by binding to the 5'-leader sequence and broadening the substrate specificity of the ribozyme. This Nostoc punctiforme (strain ATCC 29133 / PCC 73102) protein is Ribonuclease P protein component.